A 332-amino-acid polypeptide reads, in one-letter code: DNA-directed RNA polymerase subunit alpha (332 aa).

Residues 1–226 (MLIAQRPTLT…ELFGLARELN (226 aa)) are alpha N-terminal domain (alpha-NTD). The segment at 243-332 (LSSELSMPIE…GYDEDESTTI (90 aa)) is alpha C-terminal domain (alpha-CTD).

It belongs to the RNA polymerase alpha chain family. In terms of assembly, homodimer. The RNAP catalytic core consists of 2 alpha, 1 beta, 1 beta' and 1 omega subunit. When a sigma factor is associated with the core the holoenzyme is formed, which can initiate transcription.

It catalyses the reaction RNA(n) + a ribonucleoside 5'-triphosphate = RNA(n+1) + diphosphate. Functionally, DNA-dependent RNA polymerase catalyzes the transcription of DNA into RNA using the four ribonucleoside triphosphates as substrates. The chain is DNA-directed RNA polymerase subunit alpha from Leifsonia xyli subsp. xyli (strain CTCB07).